The chain runs to 480 residues: Glycogen synthase 1 (480 aa).

Lysine 15 serves as a coordination point for ADP-alpha-D-glucose.

This sequence belongs to the glycosyltransferase 1 family. Bacterial/plant glycogen synthase subfamily.

The enzyme catalyses [(1-&gt;4)-alpha-D-glucosyl](n) + ADP-alpha-D-glucose = [(1-&gt;4)-alpha-D-glucosyl](n+1) + ADP + H(+). It participates in glycan biosynthesis; glycogen biosynthesis. Its function is as follows. Synthesizes alpha-1,4-glucan chains using ADP-glucose. The protein is Glycogen synthase 1 (glgA1) of Rhizobium meliloti (strain 1021) (Ensifer meliloti).